A 137-amino-acid polypeptide reads, in one-letter code: MNALRGWLAALGSMLLASAAQLGMRWGMSRLPLPEAWAGQTPERAALLAVALAVAAYAASLLCWLAALRHLPLGRAYSLLSASYALVYLLAASLPAFDETFSTSKILGVGLVVLGVLTVNARRTAAAPAHHPSRKAP.

Residues 1–3 (MNA) lie on the Cytoplasmic side of the membrane. Residues 4–24 (LRGWLAALGSMLLASAAQLGM) form a helical membrane-spanning segment. Residues 25–44 (RWGMSRLPLPEAWAGQTPER) lie on the Periplasmic side of the membrane. A helical membrane pass occupies residues 45–65 (AALLAVALAVAAYAASLLCWL). The Cytoplasmic portion of the chain corresponds to 66-76 (AALRHLPLGRA). Residues 77 to 97 (YSLLSASYALVYLLAASLPAF) form a helical membrane-spanning segment. Residues 98–100 (DET) lie on the Periplasmic side of the membrane. Residues 101 to 121 (FSTSKILGVGLVVLGVLTVNA) form a helical membrane-spanning segment. Residues 122–137 (RRTAAAPAHHPSRKAP) lie on the Cytoplasmic side of the membrane.

It belongs to the ArnF family. In terms of assembly, heterodimer of ArnE and ArnF.

Its subcellular location is the cell inner membrane. The protein operates within bacterial outer membrane biogenesis; lipopolysaccharide biosynthesis. Its function is as follows. Translocates 4-amino-4-deoxy-L-arabinose-phosphoundecaprenol (alpha-L-Ara4N-phosphoundecaprenol) from the cytoplasmic to the periplasmic side of the inner membrane. The protein is Probable 4-amino-4-deoxy-L-arabinose-phosphoundecaprenol flippase subunit ArnF of Pseudomonas aeruginosa (strain LESB58).